We begin with the raw amino-acid sequence, 305 residues long: Glycine--tRNA ligase alpha subunit (305 aa).

Belongs to the class-II aminoacyl-tRNA synthetase family. As to quaternary structure, tetramer of two alpha and two beta subunits.

The protein localises to the cytoplasm. The enzyme catalyses tRNA(Gly) + glycine + ATP = glycyl-tRNA(Gly) + AMP + diphosphate. This chain is Glycine--tRNA ligase alpha subunit, found in Streptococcus pneumoniae (strain ATCC BAA-255 / R6).